The following is a 376-amino-acid chain: Putative F-box protein At1g30930 (376 aa).

The F-box domain occupies 1–44; it reads MKNSIPIDLIIEIVSRSTAKSVARCHCVSKQWRAIFRRKYFIEL.

This chain is Putative F-box protein At1g30930, found in Arabidopsis thaliana (Mouse-ear cress).